The following is a 635-amino-acid chain: Chaperone protein DnaK (635 aa).

Thr198 carries the phosphothreonine; by autocatalysis modification. A disordered region spans residues Tyr598–Lys635. The span at His613 to Asp624 shows a compositional bias: basic and acidic residues. Positions Ala625–Lys635 are enriched in acidic residues.

The protein belongs to the heat shock protein 70 family.

In terms of biological role, acts as a chaperone. This is Chaperone protein DnaK from Geotalea uraniireducens (strain Rf4) (Geobacter uraniireducens).